The chain runs to 283 residues: Bifunctional protein FolD (283 aa).

Residues 163–165 (GRS), Ser-188, and Ile-229 contribute to the NADP(+) site.

Belongs to the tetrahydrofolate dehydrogenase/cyclohydrolase family. As to quaternary structure, homodimer.

The enzyme catalyses (6R)-5,10-methylene-5,6,7,8-tetrahydrofolate + NADP(+) = (6R)-5,10-methenyltetrahydrofolate + NADPH. The catalysed reaction is (6R)-5,10-methenyltetrahydrofolate + H2O = (6R)-10-formyltetrahydrofolate + H(+). It functions in the pathway one-carbon metabolism; tetrahydrofolate interconversion. In terms of biological role, catalyzes the oxidation of 5,10-methylenetetrahydrofolate to 5,10-methenyltetrahydrofolate and then the hydrolysis of 5,10-methenyltetrahydrofolate to 10-formyltetrahydrofolate. The chain is Bifunctional protein FolD from Campylobacter concisus (strain 13826).